A 129-amino-acid chain; its full sequence is uncharacterized protein (129 aa).

The span at 91 to 114 (ASEKVGEMKEAASEKASEMKEAVS) shows a compositional bias: basic and acidic residues. Residues 91–129 (ASEKVGEMKEAASEKASEMKEAVSEKATQAVDAVKEATK) are disordered.

This sequence belongs to the LEA type 1 family.

This is an uncharacterized protein from Haemophilus influenzae (strain ATCC 51907 / DSM 11121 / KW20 / Rd).